The following is a 407-amino-acid chain: Chorismate synthase (407 aa).

Residues R43 and R49 each contribute to the NADP(+) site. FMN-binding positions include 143–145, 264–265, G308, 323–327, and R349; these read RSS, QA, and KPIST.

This sequence belongs to the chorismate synthase family. Homotetramer. Requires FMNH2 as cofactor.

It carries out the reaction 5-O-(1-carboxyvinyl)-3-phosphoshikimate = chorismate + phosphate. Its pathway is metabolic intermediate biosynthesis; chorismate biosynthesis; chorismate from D-erythrose 4-phosphate and phosphoenolpyruvate: step 7/7. Its function is as follows. Catalyzes the anti-1,4-elimination of the C-3 phosphate and the C-6 proR hydrogen from 5-enolpyruvylshikimate-3-phosphate (EPSP) to yield chorismate, which is the branch point compound that serves as the starting substrate for the three terminal pathways of aromatic amino acid biosynthesis. This reaction introduces a second double bond into the aromatic ring system. The polypeptide is Chorismate synthase (Corynebacterium efficiens (strain DSM 44549 / YS-314 / AJ 12310 / JCM 11189 / NBRC 100395)).